Reading from the N-terminus, the 644-residue chain is MASSIDPLTRLHGILSSYLSEVLGVDRSVVERLLAPPPRKEYGDLGFPLMRFARSSNASADSIVESLRGKLWERGITWASPTLEAGYLNIVFDVEKLGDEVFRLLASGWRPSTARTSRPETIVVEHTSANPIHPLHLGHARNSSLGDALARLLEARGHRVNRRFYVDDVGRQAVVASLGFKLSGVTPRELASRMGVKVDHAVGWVYAVTHNALETVTARKRGDTSKVDEALSTLARLKERGDREVFDRILEAVGSLDDPEGLVSEMMRKYERGEEPEKSLIRGVVSAVLEGFRETLGRFGVDFDDWDWESDLLWSGLVNKIIEEARRSPFLTTHKDAIALDIPRIVREVLARDPEAASTIKLPRSLEIPPLILVRSDGTTLYTTRDLAYSVYKFRVTGADRVINVIGADQRLPQLQIRLALLGLGYRREALNMMHYDYEIVSLPGRRMSSRRGEYVTLDELLEMAKARSVREVESRNPGADRDWIESTAEKIAVGAVRFALVRPGRLKPITLDVERILDLKENTAPYLQYTYARASSILEKHGEIDYLKAHPASLEEGSRRELFVEALRFPLVSAKAADDLAPEDLASYLLRLADMFNSWYQKDSVIHEEWEGARHAKAALVLLVKSVIGEGLRLLGVEPLEKM.

The 'HIGH' region signature appears at 129-139 (ANPIHPLHLGH).

Belongs to the class-I aminoacyl-tRNA synthetase family.

It localises to the cytoplasm. It catalyses the reaction tRNA(Arg) + L-arginine + ATP = L-arginyl-tRNA(Arg) + AMP + diphosphate. In Aeropyrum pernix (strain ATCC 700893 / DSM 11879 / JCM 9820 / NBRC 100138 / K1), this protein is Arginine--tRNA ligase (argS).